Consider the following 360-residue polypeptide: MDLGVFIPIGNNGWLISTASPQYKPTFELNKQIVQRAEHYGFEFALSMIKLRGFGGKSEFWDYNLESFTLMAGLAAVTSRIKLFASTAVLTLPPAIVARMATTIDSISGGRFGINIVSGWAKAEYEQMGLWPGDDYFGYRYAYSTEYVQVMQELWRTGASDFKGKYFQMTDCHMKPLPAHKIEIVAAGQSPTGMAFAATYADYNFVLASGVNTPTAHVKLNEQLLDAVAKTGRDVGAYVLFMVIADETDEAAMAKWQAYKDGTDVDALVWMADQGSKDQSAAGSSTAKTINLPEQALNFNMGTIVGSYATVARLLDEAASVPGTKGLMLTFDDFVQGIESFGQHVQPLMTSRAARLLPAA.

Residues 49-50, asparagine 115, glutamate 124, 140-141, and serine 190 contribute to the FMN site; these read IK and RY.

Belongs to the NtaA/SnaA/DszA monooxygenase family. RutA subfamily.

It catalyses the reaction uracil + FMNH2 + NADH + O2 = (Z)-3-ureidoacrylate + FMN + NAD(+) + H2O + H(+). The catalysed reaction is thymine + FMNH2 + NADH + O2 = (Z)-2-methylureidoacrylate + FMN + NAD(+) + H2O + H(+). In terms of biological role, catalyzes the pyrimidine ring opening between N-3 and C-4 by an unusual flavin hydroperoxide-catalyzed mechanism, adding oxygen atoms in the process to yield ureidoacrylate peracid, that immediately reacts with FMN forming ureidoacrylate and FMN-N(5)-oxide. The FMN-N(5)-oxide reacts spontaneously with NADH to produce FMN. Requires the flavin reductase RutF to regenerate FMN in vivo. The sequence is that of Pyrimidine monooxygenase RutA from Bradyrhizobium sp. (strain BTAi1 / ATCC BAA-1182).